The following is an 860-amino-acid chain: Alanine--tRNA ligase (860 aa).

Positions 563, 567, 665, and 669 each coordinate Zn(2+).

It belongs to the class-II aminoacyl-tRNA synthetase family. The cofactor is Zn(2+).

The protein localises to the cytoplasm. It catalyses the reaction tRNA(Ala) + L-alanine + ATP = L-alanyl-tRNA(Ala) + AMP + diphosphate. Its function is as follows. Catalyzes the attachment of alanine to tRNA(Ala) in a two-step reaction: alanine is first activated by ATP to form Ala-AMP and then transferred to the acceptor end of tRNA(Ala). Also edits incorrectly charged Ser-tRNA(Ala) and Gly-tRNA(Ala) via its editing domain. In Vibrio cholerae serotype O1 (strain ATCC 39541 / Classical Ogawa 395 / O395), this protein is Alanine--tRNA ligase.